A 448-amino-acid chain; its full sequence is Glucose-6-phosphate isomerase (448 aa).

Glu-290 acts as the Proton donor in catalysis. Active-site residues include His-311 and Lys-425.

It belongs to the GPI family.

It localises to the cytoplasm. The enzyme catalyses alpha-D-glucose 6-phosphate = beta-D-fructose 6-phosphate. The protein operates within carbohydrate biosynthesis; gluconeogenesis. It functions in the pathway carbohydrate degradation; glycolysis; D-glyceraldehyde 3-phosphate and glycerone phosphate from D-glucose: step 2/4. In terms of biological role, catalyzes the reversible isomerization of glucose-6-phosphate to fructose-6-phosphate. This Latilactobacillus sakei subsp. sakei (strain 23K) (Lactobacillus sakei subsp. sakei) protein is Glucose-6-phosphate isomerase.